Consider the following 365-residue polypeptide: Phospho-N-acetylmuramoyl-pentapeptide-transferase (365 aa).

The next 10 membrane-spanning stretches (helical) occupy residues 22–42 (YISVRIIMISITSLLITLALG), 74–94 (TMGGVLILSSVIISCLLWGNL), 95–115 (TSIYLWILILVVIFFGAIGFF), 134–154 (KFALQSIFSIVLAIVLFYLLS), 168–188 (SLYIPMGIVIFVVLAFFIING), 201–221 (GLAIVPVVLVAAGLGIYAYIE), 240–260 (LAEVAVFCAAVCGSGLAFLWF), 267–287 (VFMGDVGSLTLGAVLGVIAVM), 292–312 (LIFFIMGLLFVVEALSVMLQV), and 342–362 (KVVIRFWIISLILFLIGFAAI).

The protein belongs to the glycosyltransferase 4 family. MraY subfamily. It depends on Mg(2+) as a cofactor.

The protein localises to the cell inner membrane. It carries out the reaction UDP-N-acetyl-alpha-D-muramoyl-L-alanyl-gamma-D-glutamyl-meso-2,6-diaminopimeloyl-D-alanyl-D-alanine + di-trans,octa-cis-undecaprenyl phosphate = di-trans,octa-cis-undecaprenyl diphospho-N-acetyl-alpha-D-muramoyl-L-alanyl-D-glutamyl-meso-2,6-diaminopimeloyl-D-alanyl-D-alanine + UMP. It participates in cell wall biogenesis; peptidoglycan biosynthesis. Its function is as follows. Catalyzes the initial step of the lipid cycle reactions in the biosynthesis of the cell wall peptidoglycan: transfers peptidoglycan precursor phospho-MurNAc-pentapeptide from UDP-MurNAc-pentapeptide onto the lipid carrier undecaprenyl phosphate, yielding undecaprenyl-pyrophosphoryl-MurNAc-pentapeptide, known as lipid I. In Francisella tularensis subsp. holarctica (strain OSU18), this protein is Phospho-N-acetylmuramoyl-pentapeptide-transferase.